The chain runs to 315 residues: Protein MFI (315 aa).

As to quaternary structure, can homodimerize. Interacts with MFF; the interaction inhibits MFF interaction with DNM1L. As to expression, enriched in the pancreatic beta cell and the testis and is expressed at low levels in other tissues tested.

It localises to the cytoplasm. The protein localises to the cytosol. It is found in the mitochondrion outer membrane. Its function is as follows. Acts as an inhibitor of mitochondrial fission. Interacts with MFF and prevents DNM1L recruitment to mitochondria, promoting a more fused mitochondrial network. The sequence is that of Protein MFI from Mus musculus (Mouse).